A 376-amino-acid chain; its full sequence is 3-dehydroquinate synthase (376 aa).

NAD(+)-binding positions include 115 to 119 (GVIGD), 139 to 140 (TS), Lys152, and Lys161. Positions 194, 256, and 275 each coordinate Zn(2+).

The protein belongs to the sugar phosphate cyclases superfamily. Dehydroquinate synthase family. It depends on Co(2+) as a cofactor. Requires Zn(2+) as cofactor. NAD(+) serves as cofactor.

The protein resides in the cytoplasm. It catalyses the reaction 7-phospho-2-dehydro-3-deoxy-D-arabino-heptonate = 3-dehydroquinate + phosphate. The protein operates within metabolic intermediate biosynthesis; chorismate biosynthesis; chorismate from D-erythrose 4-phosphate and phosphoenolpyruvate: step 2/7. In terms of biological role, catalyzes the conversion of 3-deoxy-D-arabino-heptulosonate 7-phosphate (DAHP) to dehydroquinate (DHQ). This chain is 3-dehydroquinate synthase, found in Rhizobium leguminosarum bv. trifolii (strain WSM2304).